Consider the following 1256-residue polypeptide: Centrosome and spindle pole-associated protein 1 (1256 aa).

Coiled coils occupy residues Ala-38–Asp-62 and Glu-114–Leu-135. Positions Gly-189–Ser-208 are enriched in basic and acidic residues. Disordered regions lie at residues Gly-189 to Ser-244 and Ala-381 to Phe-403. Over residues Leu-222–Asn-232 the composition is skewed to polar residues. Residue Ser-244 is modified to Phosphoserine. The stretch at Ser-244–Leu-270 forms a coiled coil. Residues Gln-417–Ala-449 are a coiled coil. A phosphoserine mark is found at Ser-459 and Ser-527. Residues Ser-625–Asn-669 are a coiled coil. Disordered regions lie at residues Ala-735–Glu-757 and Glu-813–Glu-853. Over residues Asn-736–Pro-748 the composition is skewed to polar residues. 2 positions are modified to phosphoserine: Ser-901 and Ser-920. The disordered stretch occupies residues Ser-913 to Ala-932. Residues Ala-925–Met-964 are a coiled coil. Ser-966 bears the Phosphoserine mark. Disordered stretches follow at residues Glu-1114–Val-1147 and Leu-1232–Gly-1256. Residues Phe-1246 to Gly-1256 are compositionally biased toward polar residues.

As to quaternary structure, interacts with PLEKHG6. Interacts with ARMC9, TOGARAM1, CCDC66, CEP104 and CEP290. Post-translationally, phosphorylated. Phosphorylation increases in colcemide-treated cells. In terms of tissue distribution, expressed in adult and fetal brain with enrichment in the cerebellum. Detected in testis.

The protein localises to the cytoplasm. The protein resides in the cytoskeleton. Its subcellular location is the microtubule organizing center. It is found in the centrosome. It localises to the spindle. The protein localises to the spindle pole. The protein resides in the cell projection. Its subcellular location is the cilium. May play a role in cell-cycle-dependent microtubule organization. This Homo sapiens (Human) protein is Centrosome and spindle pole-associated protein 1 (CSPP1).